An 854-amino-acid polypeptide reads, in one-letter code: Transcription factor asR3 (854 aa).

The zn(2)-C6 fungal-type DNA-binding region spans 19–45 (CWECRRRKIKCDRNDPCAHCIRHETQC). The disordered stretch occupies residues 56–156 (TDSDVSRTRP…SLSTNTSPSA (101 aa)). Composition is skewed to polar residues over residues 78–90 (ASGS…TRPS) and 125–145 (LNPS…SSRG). A compositionally biased stretch (low complexity) spans 146 to 156 (PSLSTNTSPSA).

The protein resides in the nucleus. Functionally, transcription factor; part of the gene cluster that mediates the biosynthesis of xenovulene A, an unusual meroterpenoid that has potent inhibitory effects on the human gamma-aminobutyrate A (GABAA) benzodiazepine receptor. This chain is Transcription factor asR3, found in Sarocladium schorii (Acremonium strictum (strain IMI 501407)).